We begin with the raw amino-acid sequence, 249 residues long: Triosephosphate isomerase (249 aa).

Residue 9–11 (NWK) coordinates substrate. His95 functions as the Electrophile in the catalytic mechanism. Glu167 functions as the Proton acceptor in the catalytic mechanism. Residues Gly173, Ser213, and 234 to 235 (GG) each bind substrate.

This sequence belongs to the triosephosphate isomerase family. Homodimer.

The protein resides in the cytoplasm. It catalyses the reaction D-glyceraldehyde 3-phosphate = dihydroxyacetone phosphate. It functions in the pathway carbohydrate biosynthesis; gluconeogenesis. It participates in carbohydrate degradation; glycolysis; D-glyceraldehyde 3-phosphate from glycerone phosphate: step 1/1. Functionally, involved in the gluconeogenesis. Catalyzes stereospecifically the conversion of dihydroxyacetone phosphate (DHAP) to D-glyceraldehyde-3-phosphate (G3P). This Dictyoglomus turgidum (strain DSM 6724 / Z-1310) protein is Triosephosphate isomerase.